The following is a 119-amino-acid chain: Chorion class CA protein ERA.5 (119 aa).

The N-terminal stretch at 1 to 21 (MSTYTFVLFCLQICLIQNVYS) is a signal peptide. A left arm region spans residues 22–55 (QCLGRVGPGGPPVGPYGGPLGGPGYGPVGYGGCG). The central domain stretch occupies residues 56–103 (GYGGSGIGNVAVAGELPVAGSSAVMGQVPVIGAVEFAGPACAVGSVSI). Positions 104 to 119 (SGACGPTCGCGGSPYY) are right arm.

The protein belongs to the chorion protein family.

In terms of biological role, this protein is one of many from the eggshell of the silk moth. The polypeptide is Chorion class CA protein ERA.5 (ERA.5) (Bombyx mori (Silk moth)).